The sequence spans 127 residues: Large ribosomal subunit protein bL20 (127 aa).

The protein belongs to the bacterial ribosomal protein bL20 family.

In terms of biological role, binds directly to 23S ribosomal RNA and is necessary for the in vitro assembly process of the 50S ribosomal subunit. It is not involved in the protein synthesizing functions of that subunit. The protein is Large ribosomal subunit protein bL20 of Bifidobacterium longum (strain NCC 2705).